The chain runs to 158 residues: Sec-independent protein translocase protein TatB (158 aa).

Residues 1-21 (MFGISFSELLLVGLVALLVLG) form a helical membrane-spanning segment. The disordered stretch occupies residues 73 to 158 (DEARKMFAPN…HDSSLPPRAP (86 aa)). Residues 80 to 90 (APNQPSENSPE) show a composition bias toward low complexity.

Belongs to the TatB family. As to quaternary structure, the Tat system comprises two distinct complexes: a TatABC complex, containing multiple copies of TatA, TatB and TatC subunits, and a separate TatA complex, containing only TatA subunits. Substrates initially bind to the TatABC complex, which probably triggers association of the separate TatA complex to form the active translocon.

The protein localises to the cell inner membrane. Its function is as follows. Part of the twin-arginine translocation (Tat) system that transports large folded proteins containing a characteristic twin-arginine motif in their signal peptide across membranes. Together with TatC, TatB is part of a receptor directly interacting with Tat signal peptides. TatB may form an oligomeric binding site that transiently accommodates folded Tat precursor proteins before their translocation. The chain is Sec-independent protein translocase protein TatB from Pseudomonas syringae pv. syringae (strain B728a).